Reading from the N-terminus, the 473-residue chain is MSFTVAIVGRPNVGKSTLFNRLVGKKLALVDDTPGVTRDRRPGDARLMGLTFTIIDTAGLEEADAESLQGRMRAQTEAAIDEADLSLFVVDAKSGLTPVDTDLAEMLRRRGKPVVLVANKSEARGSDSGFYDAYTLGLGEPTPISAEHGQGMLDLRDAIVAAIGEDRAYPEKEDVAVTDVDIPQSSDEGDEDEEPIYDDTKPLRVAIVGRPNAGKSTLINRFLGEDRLLTGPEAGITRDSISVEWDWRGRTIKMFDTAGMRRKARVIEKLEKLSVADALRAIRFAETVVIVFDATIPFEKQDLQIVDLVLREGRAAVLAFNKWDMIEDRQAVLADLREKTDRLLPQARGIRAVPISGQTGWGLDKLMQAIIDTDKVWNKRISTARLNRWLETQQVQHPPPAVSGRRIKLKYMTQVKARPPAFMISCTRSDALPESYTRYLINGLRADFDMPSVPIRIHFRSPDNPFEGKKRRT.

2 EngA-type G domains span residues 3–167 (FTVA…GEDR) and 203–378 (LRVA…KVWN). GTP is bound by residues 9-16 (GRPNVGKS), 56-60 (DTAGL), 119-122 (NKSE), 209-216 (GRPNAGKS), 256-260 (DTAGM), and 321-324 (NKWD). The KH-like domain occupies 379-463 (KRISTARLNR…PIRIHFRSPD (85 aa)).

This sequence belongs to the TRAFAC class TrmE-Era-EngA-EngB-Septin-like GTPase superfamily. EngA (Der) GTPase family. In terms of assembly, associates with the 50S ribosomal subunit.

Functionally, GTPase that plays an essential role in the late steps of ribosome biogenesis. This is GTPase Der from Rhizobium johnstonii (strain DSM 114642 / LMG 32736 / 3841) (Rhizobium leguminosarum bv. viciae).